Here is a 608-residue protein sequence, read N- to C-terminus: Endo-1,4-beta-xylanase C (608 aa).

The first 25 residues, 1-25 (MKTFSVTKSSVVFAMALGMASTAFA), serve as a signal peptide directing secretion. The GH11 1 domain occupies 40-250 (TITSNQTGKI…VNGEVRGGHM (211 aa)). Glutamate 142 (nucleophile) is an active-site residue. Catalysis depends on glutamate 237, which acts as the Proton donor. The span at 263–294 (SDPVSSSSVKSSSSTDAPKSSSSKGNGNVSGK) shows a compositional bias: low complexity. Residues 263–296 (SDPVSSSSVKSSSSTDAPKSSSSKGNGNVSGKID) form a disordered region. Residues 316-514 (NSSVTGNVGS…GSGSFDVTYF (199 aa)) form the GH11 2 domain. Catalysis depends on glutamate 409, which acts as the Nucleophile. Glutamate 501 (proton donor) is an active-site residue. The segment at 520–539 (AHPLAQPEPESSSSEAKVES) is disordered. The span at 527–539 (EPESSSSEAKVES) shows a compositional bias: low complexity.

The protein belongs to the glycosyl hydrolase 11 (cellulase G) family.

The enzyme catalyses Endohydrolysis of (1-&gt;4)-beta-D-xylosidic linkages in xylans.. Its pathway is glycan degradation; xylan degradation. Its function is as follows. Cleaves xylans with the production of xylose, xylobiose and xylo-oligosaccharides. The protein is Endo-1,4-beta-xylanase C (xynC) of Fibrobacter succinogenes (strain ATCC 19169 / S85).